A 322-amino-acid chain; its full sequence is MEADLSDFNIDAPRWDQCTFLGRVKHFFNITDPRTVLVPERELDWAKVMVEQSRMGTVPPGTQVEQLFYAKKLYDSAFHPDTGHKMNVIGRMSFQVPGGMIITGFMLQFYRTMPAVIFWQWVNQSFNALVNYTNRNAASPTSVRQMAVSYITATTTAVATAVGMNMLTKRAPPLVGRWVPFAAVAAANCVNIPMMRQQELIQGICVKDRNHNEIGHSRRAAAIGITQVVISRITMAAPGMILLPVLMERLEKLRFVQRVRVLHAPLQVLLSGCFLIFMVPVACGLFPQQCELPVSYLEPELQDTIKAKYREPVPHVYFNKGL.

N-acetylmethionine is present on methionine 1. Transmembrane regions (helical) follow at residues 100–122 (MIIT…WQWV), 142–164 (SVRQ…AVGM), 174–192 (LVGR…CVNI), 228–250 (VVIS…MERL), and 265–287 (PLQV…GLFP).

Belongs to the sideroflexin family.

The protein localises to the mitochondrion inner membrane. Its subcellular location is the mitochondrion outer membrane. The enzyme catalyses L-serine(in) = L-serine(out). In terms of biological role, mitochondrial amino-acid transporter that mediates transport of serine into mitochondria. Involved in mitochondrial iron homeostasis by regulating heme biosynthesis. In Bos taurus (Bovine), this protein is Sideroflexin-2.